Here is a 664-residue protein sequence, read N- to C-terminus: Two-component response regulator ARR2 (664 aa).

The segment at 1–21 (MVNPGHGRGPDSGTAAGGSNS) is disordered. One can recognise a Response regulatory domain in the interval 29–144 (RVLVVDDDPT…ALKNIWQHVV (116 aa)). Position 80 is a 4-aspartylphosphate (Asp-80). Residues 151 to 215 (WNVSEHSGGS…DDKEDSSSLK (65 aa)) are disordered. Residues 165–178 (GGDRDRQQQHREDA) show a composition bias toward basic and acidic residues. Over residues 180-191 (NNSSSVNEGNGR) the composition is skewed to polar residues. A compositionally biased stretch (acidic residues) spans 200-209 (EVDDQGDDKE). Residues 215–218 (KKPR) carry the Nuclear localization signal motif. The myb-like GARP DNA-binding region spans 218-268 (RVVWSVELHQQFVAAVNQLGVDKAVPKKILEMMNVPGLTRENVASHLQKYR). The span at 554–567 (AAFSTSEAYSSSST) shows a compositional bias: low complexity. The tract at residues 554 to 589 (AAFSTSEAYSSSSTQRKRRETDATVVGEHGQNLQSP) is disordered.

Belongs to the ARR family. Type-B subfamily. As to quaternary structure, binds the target DNA as a monomer. Interacts with histidine-containing phosphotransfer proteins. Post-translationally, two-component system major event consists of a His-to-Asp phosphorelay between a sensor histidine kinase (HK) and a response regulator (RR). In plants, the His-to-Asp phosphorelay involves an additional intermediate named Histidine-containing phosphotransfer protein (HPt). This multistep phosphorelay consists of a His-Asp-His-Asp sequential transfer of a phosphate group between first a His and an Asp of the HK protein, followed by the transfer to a conserved His of the HPt protein and finally the transfer to an Asp in the receiver domain of the RR protein. Phosphorylated in response to cytokinin mediated by AHK3. As to expression, detected in the whole plant. Predominantly expressed in pollen.

It is found in the nucleus. In terms of biological role, transcriptional activator that binds specifically to the DNA sequence 5'-[AG]GATT-3'. Functions as a response regulator involved in His-to-Asp phosphorelay signal transduction system. Phosphorylation of the Asp residue in the receiver domain activates the ability of the protein to promote the transcription of target genes. Could directly activate some type-A response regulators in response to cytokinins. Involved in the expression of nuclear genes for components of mitochondrial complex I. Promotes cytokinin-mediated leaf longevity. Involved in the ethylene signaling pathway in an ETR1-dependent manner and in the cytokinin signaling pathway. This chain is Two-component response regulator ARR2 (ARR2), found in Arabidopsis thaliana (Mouse-ear cress).